The chain runs to 377 residues: MKEATMYYIGVMSGTSLDGVDLALMDFSCAQPQLIHADFYPMPPAIRQQISTLCNSGTTTLQALGELDHQLGLLYTDCIQQFLQKHRLSPEQITAIGCHGQTVWHSPNSHYPFTMQIGDANLIAAKTGITTVADFRRKDMAFGGQGAPLVPAFHQALFRKPNQATVVLNVGGISNISRLLPNEEVIGYDTGPGNTLLDAWIEKHQGKAYDKNAEWAKSGKVNTDLLADLLDEPFFALPAPKSTGRELFNLAWLNKKLQKHTALLPQDVQATLVELTAQSIVDQLNQIETELDRHLLVCGGGVKNCLLMARLTALLPQWQVQTTNDYGLDADYVEAAAFAWLAYQRLNDLPGNLPSVTGAKSAVSLGAIYPKEKDVAA.

14 to 21 lines the ATP pocket; it reads GTSLDGVD.

The protein belongs to the anhydro-N-acetylmuramic acid kinase family.

The catalysed reaction is 1,6-anhydro-N-acetyl-beta-muramate + ATP + H2O = N-acetyl-D-muramate 6-phosphate + ADP + H(+). The protein operates within amino-sugar metabolism; 1,6-anhydro-N-acetylmuramate degradation. It participates in cell wall biogenesis; peptidoglycan recycling. Functionally, catalyzes the specific phosphorylation of 1,6-anhydro-N-acetylmuramic acid (anhMurNAc) with the simultaneous cleavage of the 1,6-anhydro ring, generating MurNAc-6-P. Is required for the utilization of anhMurNAc either imported from the medium or derived from its own cell wall murein, and thus plays a role in cell wall recycling. The protein is Anhydro-N-acetylmuramic acid kinase of Pasteurella multocida (strain Pm70).